The chain runs to 203 residues: uncharacterized protein (203 aa).

The signal sequence occupies residues 1–23 (MKKIYKALISSLLLSTSINVAYA). An SH3b domain is found at 24–87 (ETQYVTENLS…ILNSDLSSTP (64 aa)). A helical membrane pass occupies residues 167 to 189 (IAIQWFIYGGSVLGVGLLFGLLI).

The protein to E.coli YgiM.

Its subcellular location is the membrane. This is an uncharacterized protein from Haemophilus influenzae (strain ATCC 51907 / DSM 11121 / KW20 / Rd).